We begin with the raw amino-acid sequence, 313 residues long: Adhesin MafA 1 (313 aa).

An N-terminal signal peptide occupies residues 1-14; it reads MKILLLLIPLVLTA. The N-palmitoyl cysteine moiety is linked to residue Cys15. Cys15 carries S-diacylglycerol cysteine lipidation. Residues 282 to 298 show a composition bias toward polar residues; sequence GDTTAQNRPDFKQNNGK. The segment at 282-313 is disordered; the sequence is GDTTAQNRPDFKQNNGKNPDVGNEVIRRRKGG.

Belongs to the MafA family.

Its subcellular location is the cell outer membrane. In Neisseria meningitidis serogroup C / serotype 2a (strain ATCC 700532 / DSM 15464 / FAM18), this protein is Adhesin MafA 1 (mafA1).